The chain runs to 997 residues: MSSNTVAQFATELKMPANVLLEQLRAAGVDLKSVDDAVTDSDKAKLLESLRRAHGATEGKKITLTRRQTSEIRQADATGRSRTIQVEVRKKRVFVKRDPAELAAEQAAARAEEAAAEAVPAEAAPAPAEPVRAEPAVETAAKPVEPPVAEAPAEPVAAPAAEPQSEQPAQAEAQPEPTPAAQAEPEPQPEPQPEAAPAQAVAEPVEPAKNVSVTETEAEQARPEPVVHAQTELTSKTPAPVAQPSAPAESPKSAKAEPAAAPKTTAKPGEIRRAAAPAAPDRAREEARRAAEAEAAALREMLSRPRKVLRAPEPEPQAGALSGTLHKPAGKPATTAAPKKDAKPGAPGAKKTIKTAEVSSTWSDDSARKKPADNKPAVTTRDGWRAGGKGGRGGRNSRNQHQDRRHEQVQQEFIAREIHVPETISVADLAHKMSVKAAEVIKQLMKLGQMVTINQVLDQETAMIVVQEFGHMAIAAKLDDPEAFLDETAAVTEAEAEPRAPVVTVMGHVDHGKTSLLDYIRRAKVASGEAGGITQHIGAYHVETGRGVVTFLDTPGHEAFTAMRARGAKATDIVILVVAADDGVMPQTREAIHHAKAGGVPLVVAVNKIDKPEANPERVKQELVAEEVVPEEYGGDVPFVPVSAKTGAGIDDLLENVLLQAEILELKAPIEAPAKGLVIEARLDKGRGPVATILVQSGTLKRGDVVLAGASFGRVRAMLDENGKQIQTAGPSIPVEIQGLTEVPAAGDELMVLSDERKAREIALFRQGKFRDVKLARQQAAKLESMFDNLGEGTQTLALIVKTDVQGSQEALVSSLTKLSTDEVRVQVVHAAVGGISESDVNLAIASNAVVIGFNVRAEQSAKKLAETNGIDLRYYNIIYDAVDEVKAAMSGMLAPEKREEVIGLVEVREVYTISRIGTVAGCMVLDGVVRRDSQVRLLRNNVVQWTGHLDSLRRFKDDVKEVKSGFDCGLTLRGNNDLQLGDQLEVFEIKEIARTL.

The tract at residues 101 to 409 (ELAAEQAAAR…QHQDRRHEQV (309 aa)) is disordered. Low complexity-rich tracts occupy residues 116–185 (AEAV…QAEP), 195–208 (AAPA…VEPA), and 244–280 (PSAP…PAAP). Basic and acidic residues predominate over residues 281–292 (DRAREEARRAAE). Residues 385–394 (RAGGKGGRGG) are compositionally biased toward gly residues. Residues 400–409 (QHQDRRHEQV) are compositionally biased toward basic and acidic residues. The tr-type G domain maps to 498–665 (PRAPVVTVMG…NVLLQAEILE (168 aa)). The segment at 507–514 (GHVDHGKT) is G1. 507–514 (GHVDHGKT) lines the GTP pocket. The G2 stretch occupies residues 532-536 (GITQH). The tract at residues 553-556 (DTPG) is G3. GTP is bound by residues 553–557 (DTPGH) and 607–610 (NKID). The interval 607–610 (NKID) is G4. The interval 643 to 645 (SAK) is G5.

It belongs to the TRAFAC class translation factor GTPase superfamily. Classic translation factor GTPase family. IF-2 subfamily.

Its subcellular location is the cytoplasm. Functionally, one of the essential components for the initiation of protein synthesis. Protects formylmethionyl-tRNA from spontaneous hydrolysis and promotes its binding to the 30S ribosomal subunits. Also involved in the hydrolysis of GTP during the formation of the 70S ribosomal complex. This is Translation initiation factor IF-2 from Bordetella bronchiseptica (strain ATCC BAA-588 / NCTC 13252 / RB50) (Alcaligenes bronchisepticus).